Reading from the N-terminus, the 180-residue chain is Alpha-S2-casein-like A (180 aa).

An N-terminal signal peptide occupies residues 1-15 (MRFFVFTCLLAVALA). 2 positions are modified to phosphoserine: Ser23 and Ser25. Residues 46–66 (PTNQETPSVSSSEESVEVQTE) form a disordered region.

It belongs to the alpha-casein family. In terms of tissue distribution, mammary gland specific. Secreted in milk.

It localises to the secreted. Important role in the capacity of milk to transport calcium phosphate. This Oryctolagus cuniculus (Rabbit) protein is Alpha-S2-casein-like A (CSN1S2A).